The chain runs to 376 residues: Chaperone protein DnaJ (376 aa).

The J domain maps to 5–70; that stretch reads DYYEILGVSK…QKRAAYDQYG (66 aa). Residues 131-209 form a CR-type zinc finger; it reads GVTKEIRIPT…CHGHGRVERS (79 aa). Residues C144, C147, C161, C164, C183, C186, C197, and C200 each coordinate Zn(2+). 4 CXXCXGXG motif repeats span residues 144-151, 161-168, 183-190, and 197-204; these read CDVCHGSG, CPTCHGSG, CPHCQGRG, and CNKCHGHG.

It belongs to the DnaJ family. Homodimer. Zn(2+) is required as a cofactor.

It is found in the cytoplasm. Participates actively in the response to hyperosmotic and heat shock by preventing the aggregation of stress-denatured proteins and by disaggregating proteins, also in an autonomous, DnaK-independent fashion. Unfolded proteins bind initially to DnaJ; upon interaction with the DnaJ-bound protein, DnaK hydrolyzes its bound ATP, resulting in the formation of a stable complex. GrpE releases ADP from DnaK; ATP binding to DnaK triggers the release of the substrate protein, thus completing the reaction cycle. Several rounds of ATP-dependent interactions between DnaJ, DnaK and GrpE are required for fully efficient folding. Also involved, together with DnaK and GrpE, in the DNA replication of plasmids through activation of initiation proteins. In Shigella flexneri, this protein is Chaperone protein DnaJ.